The following is a 1629-amino-acid chain: Ferredoxin-dependent glutamate synthase 2, chloroplastic (1629 aa).

The N-terminal 107 residues, 1–107 (MALQSPGATG…LEDIISERGA (107 aa)), are a transit peptide targeting the chloroplast. C108 acts as the For GATase activity in catalysis. The region spanning 108–507 (CGVGFIANLE…PGMMISVDLE (400 aa)) is the Glutamine amidotransferase type-2 domain. 1186–1243 (LAETQKTLIGNGLRERVIIRVDGGFKSGVDVLIAAAMGADEYGFGTLAMIATGCIMAR) is a binding site for FMN. [3Fe-4S] cluster contacts are provided by C1239, C1245, and C1250. Residues 1599–1629 (SEEDTPEANSDHILKTTTGDEEQVSSTLAEK) are disordered.

Belongs to the glutamate synthase family. Requires [3Fe-4S] cluster as cofactor. The cofactor is FAD. FMN is required as a cofactor. Expressed predominantly in roots and slightly in leaves. Low expression in the leaf mesophyll and phloem companion cell-sieve element complex.

The protein localises to the plastid. It is found in the chloroplast stroma. The enzyme catalyses 2 oxidized [2Fe-2S]-[ferredoxin] + 2 L-glutamate = L-glutamine + 2 reduced [2Fe-2S]-[ferredoxin] + 2-oxoglutarate + 2 H(+). It participates in amino-acid biosynthesis; L-glutamate biosynthesis via GLT pathway; L-glutamate from 2-oxoglutarate and L-glutamine (ferredoxin route): step 1/1. It functions in the pathway energy metabolism; nitrogen metabolism. In terms of biological role, may play a role in primary nitrogen assimilation in roots. Could supply a constitutive level of glutamate to maintain a basal level of protein synthesis. The polypeptide is Ferredoxin-dependent glutamate synthase 2, chloroplastic (GLU2) (Arabidopsis thaliana (Mouse-ear cress)).